The following is a 443-amino-acid chain: Probable ribonuclease FAU-1 (443 aa).

This sequence belongs to the FAU-1 family.

Functionally, probable RNase involved in rRNA stability through maturation and/or degradation of precursor rRNAs. Binds to RNA in loop regions with AU-rich sequences. This is Probable ribonuclease FAU-1 from Pyrobaculum aerophilum (strain ATCC 51768 / DSM 7523 / JCM 9630 / CIP 104966 / NBRC 100827 / IM2).